A 54-amino-acid chain; its full sequence is Ribulose bisphosphate carboxylase large chain (54 aa).

Residues 1 to 2 (MS) constitute a propeptide that is removed on maturation. The residue at position 3 (proline 3) is an N-acetylproline. Residue lysine 14 is modified to N6,N6,N6-trimethyllysine.

This sequence belongs to the RuBisCO large chain family. Type I subfamily. Heterohexadecamer of 8 large chains and 8 small chains.

The protein localises to the plastid. It is found in the chloroplast. It catalyses the reaction 2 (2R)-3-phosphoglycerate + 2 H(+) = D-ribulose 1,5-bisphosphate + CO2 + H2O. It carries out the reaction D-ribulose 1,5-bisphosphate + O2 = 2-phosphoglycolate + (2R)-3-phosphoglycerate + 2 H(+). RuBisCO catalyzes two reactions: the carboxylation of D-ribulose 1,5-bisphosphate, the primary event in carbon dioxide fixation, as well as the oxidative fragmentation of the pentose substrate in the photorespiration process. Both reactions occur simultaneously and in competition at the same active site. The protein is Ribulose bisphosphate carboxylase large chain (rbcL) of Magnolia liliiflora (Mulan magnolia).